A 242-amino-acid polypeptide reads, in one-letter code: Galectin-3 (242 aa).

Residues 1–35 (MADGFSLNDALSGSGHPPNQGWPGPWGNQPAGPGG) are disordered. Alanine 2 bears the N-acetylalanine mark. The residue at position 6 (serine 6) is a Phosphoserine; by CK1. Phosphoserine is present on serine 12. Over residues 17–31 (PPNQGWPGPWGNQPA) the composition is skewed to low complexity. Repeat copies occupy residues 35-43 (GYPGAAYPG), 44-52 (AYPGHAPGA), 53-61 (YPGQAPPGP), and 62-70 (YPGPGAHGA). The interval 35–98 (GYPGAAYPGA…GAGAYPGASP (64 aa)) is 7 X 9 AA tandem repeats of Y-P-G-X(3)-P-[GS]-A. The tract at residues 55–93 (GQAPPGPYPGPGAHGAYPGQPGGPGAYPSPGQPSGAGAY) is disordered. One copy of the 5; approximate repeat lies at 71–80 (YPGQPGGPGA). Residues 80 to 93 (AYPSPGQPSGAGAY) show a composition bias toward low complexity. A 6; approximate repeat occupies 81–92 (YPSPGQPSGAGA). The stretch at 93–98 (YPGASP) is one 7; truncated repeat. One can recognise a Galectin domain in the interval 110–240 (YDLPLPGGVM…DIQLTSASHA (131 aa)). Residue 173–181 (WGREERQTT) coordinates a beta-D-galactoside. A Nuclear export signal motif is present at residues 218–233 (RNLKEINKLGISGDIQ).

In terms of assembly, probably forms homo- or heterodimers. Interacts with DMBT1. Interacts with CD6 and ALCAM. Forms a complex with the ITGA3, ITGB1 and CSPG4. Interacts with LGALS3BP, LYPD3, ZFTRAF1 and UACA. Interacts with TRIM16; this interaction mediates autophagy of damage endomembranes. Interacts with cargo receptor TMED10; the interaction mediates the translocation from the cytoplasm into the ERGIC (endoplasmic reticulum-Golgi intermediate compartment) and thereby secretion. Interacts with and inhibits by binding NCR3/NKp30.

The protein resides in the cytoplasm. The protein localises to the nucleus. It localises to the secreted. Its function is as follows. Galactose-specific lectin which binds IgE. May mediate with the alpha-3, beta-1 integrin the stimulation by CSPG4 of endothelial cells migration. Together with DMBT1, required for terminal differentiation of columnar epithelial cells during early embryogenesis. In the nucleus: acts as a pre-mRNA splicing factor. Involved in acute inflammatory responses including neutrophil activation and adhesion, chemoattraction of monocytes macrophages, opsonization of apoptotic neutrophils, and activation of mast cells. Together with TRIM16, coordinates the recognition of membrane damage with mobilization of the core autophagy regulators ATG16L1 and BECN1 in response to damaged endomembranes. When secreted, interacts with NK cell-activating receptor NCR3/NKp30 acting as an inhibitory ligand which antagonizes NK cell attack. This Oryctolagus cuniculus (Rabbit) protein is Galectin-3 (LGALS3).